The sequence spans 546 residues: Chaperonin GroEL 4 (546 aa).

ATP contacts are provided by residues 30-33 (TLGP), K51, 87-91 (DGTTT), G415, and D495. A disordered region spans residues 524-546 (APKDTPAAGQPGGPGAGGPGLDF). The segment covering 533-546 (QPGGPGAGGPGLDF) has biased composition (gly residues).

The protein belongs to the chaperonin (HSP60) family. As to quaternary structure, forms a cylinder of 14 subunits composed of two heptameric rings stacked back-to-back. Interacts with the co-chaperonin GroES.

Its subcellular location is the cytoplasm. The catalysed reaction is ATP + H2O + a folded polypeptide = ADP + phosphate + an unfolded polypeptide.. Functionally, together with its co-chaperonin GroES, plays an essential role in assisting protein folding. The GroEL-GroES system forms a nano-cage that allows encapsulation of the non-native substrate proteins and provides a physical environment optimized to promote and accelerate protein folding. The chain is Chaperonin GroEL 4 from Paraburkholderia xenovorans (strain LB400).